Here is a 123-residue protein sequence, read N- to C-terminus: Large ribosomal subunit protein bL19 (123 aa).

This sequence belongs to the bacterial ribosomal protein bL19 family.

In terms of biological role, this protein is located at the 30S-50S ribosomal subunit interface and may play a role in the structure and function of the aminoacyl-tRNA binding site. This is Large ribosomal subunit protein bL19 from Ruegeria sp. (strain TM1040) (Silicibacter sp.).